A 102-amino-acid chain; its full sequence is Small ribosomal subunit protein uS10 (102 aa).

Belongs to the universal ribosomal protein uS10 family. In terms of assembly, part of the 30S ribosomal subunit.

Functionally, involved in the binding of tRNA to the ribosomes. The sequence is that of Small ribosomal subunit protein uS10 from Methanococcus maripaludis (strain C6 / ATCC BAA-1332).